Here is a 470-residue protein sequence, read N- to C-terminus: Histidine--tRNA ligase (470 aa).

It belongs to the class-II aminoacyl-tRNA synthetase family. In terms of assembly, homodimer.

It is found in the cytoplasm. It catalyses the reaction tRNA(His) + L-histidine + ATP = L-histidyl-tRNA(His) + AMP + diphosphate + H(+). This Xanthomonas oryzae pv. oryzae (strain PXO99A) protein is Histidine--tRNA ligase.